The following is an 842-amino-acid chain: Protein P (842 aa).

Positions 1–177 (MPLSYQHFRR…FCGSPYTWEQ (177 aa)) are terminal protein domain (TP). Positions 178-345 (DLQHGAFLDG…YCLSHLVNLL (168 aa)) are spacer. The tract at residues 184–238 (FLDGPSRVGKEPFRQQSSRIPSRSPVGPSIQSKYQQSRLGLQSQKGPLARGQQGR) is disordered. Residues 197–208 (RQQSSRIPSRSP) are compositionally biased toward low complexity. The segment covering 212-228 (SIQSKYQQSRLGLQSQK) has biased composition (polar residues). The tract at residues 346–689 (QDWGPCTEHG…YMNLYPVARQ (344 aa)) is polymerase/reverse transcriptase domain (RT). Positions 356–599 (EHHIRIPRTP…YSLNFMGYVI (244 aa)) constitute a Reverse transcriptase domain. Mg(2+) contacts are provided by Asp428, Asp550, and Asp551.

It belongs to the hepadnaviridae P protein family.

The enzyme catalyses DNA(n) + a 2'-deoxyribonucleoside 5'-triphosphate = DNA(n+1) + diphosphate. The catalysed reaction is Endonucleolytic cleavage to 5'-phosphomonoester.. With respect to regulation, activated by host HSP70 and HSP40 in vitro to be able to bind the epsilon loop of the pgRNA. Because deletion of the RNase H region renders the protein partly chaperone-independent, the chaperones may be needed indirectly to relieve occlusion of the RNA-binding site by this domain. Inhibited by several reverse-transcriptase inhibitors: Lamivudine, Adefovir and Entecavir. In terms of biological role, multifunctional enzyme that converts the viral RNA genome into dsDNA in viral cytoplasmic capsids. This enzyme displays a DNA polymerase activity that can copy either DNA or RNA templates, and a ribonuclease H (RNase H) activity that cleaves the RNA strand of RNA-DNA heteroduplexes in a partially processive 3'- to 5'-endonucleasic mode. Neo-synthesized pregenomic RNA (pgRNA) are encapsidated together with the P protein, and reverse-transcribed inside the nucleocapsid. Initiation of reverse-transcription occurs first by binding the epsilon loop on the pgRNA genome, and is initiated by protein priming, thereby the 5'-end of (-)DNA is covalently linked to P protein. Partial (+)DNA is synthesized from the (-)DNA template and generates the relaxed circular DNA (RC-DNA) genome. After budding and infection, the RC-DNA migrates in the nucleus, and is converted into a plasmid-like covalently closed circular DNA (cccDNA). The activity of P protein does not seem to be necessary for cccDNA generation, and is presumably released from (+)DNA by host nuclear DNA repair machinery. The sequence is that of Protein P from Hepatitis B virus genotype G (isolate IG29227/2000) (HBV-G).